Here is a 156-residue protein sequence, read N- to C-terminus: MRIHLIAVGERMPAWVNAAYAEYANRLPAECSLNLKEIPAVKRGKNADLARIAETEGARMLEAIPKDCLVVALDEKGRSFSTAELSRRLDDWMHSGRDLALLVGGPEGLTDACRARADLVWSLSPLTFPHPLVRVILAEQVYRAWSLLRGHPYHRE.

S-adenosyl-L-methionine is bound by residues Leu73, Gly104, and 123-128 (LSPLTF).

It belongs to the RNA methyltransferase RlmH family. Homodimer.

It is found in the cytoplasm. It catalyses the reaction pseudouridine(1915) in 23S rRNA + S-adenosyl-L-methionine = N(3)-methylpseudouridine(1915) in 23S rRNA + S-adenosyl-L-homocysteine + H(+). Specifically methylates the pseudouridine at position 1915 (m3Psi1915) in 23S rRNA. This chain is Ribosomal RNA large subunit methyltransferase H, found in Thioalkalivibrio sulfidiphilus (strain HL-EbGR7).